The primary structure comprises 715 residues: MLVPIFTLKLNHKINPRMVAIGKYDGIHPCLTAATQAGKVFIHNPHTRAQRPTAHRLSQSTQDSDISLLNINQSVSCLTAGTLGPKSTGDTLLVGSQTNLLAYDVHDNTDVFYKEVTDGANAIVLGKLGDIQSPLAIIGGNCALQGFDYEGNDLFWTVTGDNVRSLVLCDFTADGKNELLVGSEDFDIRVFKEDELVTEMAENETVTSLCHMHGSRFGYALANGTVGVYDRTARYWRIKSKNHAMSIHAFDLNADGVVELITGWSNGKIDARSDRTGEVIFKDNFSSSVAGVVEGDYRMDGQIQLICTSVEGEVRGYLPASKEMKGNLMDSSIEQDLIRELSQRKQNLMLELRNYEENAKALPGLSEGESKMGVIPANTQLQTALSVRRASESQKAHIELNISTPNETIIRAVLIFAEGIFEGESHVVHPSAQNLSGCVRVPIIPPKDIPVDLHIKAFVGGKTSTQFHVFEITRQLPRFSMYDLNVDPSAPEPTGKVTFCINDRPQRVVMWLNQNFLLPEGIDSPDVTFSALRGGGLLRISLQTSGEITLRTDDIDLAGDLVQSLASFLAIEDLQAESDFPVYFKELRATLTEVDEFHSVHQKLTAAMADHSNYIRNMLVQAEDARLMGDWRNMKKRYIELYDLNRDLVNEYKIRSNNHNALLARLKSVNQAIQRAGRLRVGKPKSQVITACRDAIKNNNINALFKIMRAGTTSS.

Part of BBSome complex.

The protein localises to the cell projection. It is found in the cilium membrane. The protein resides in the cytoplasm. It localises to the cytoskeleton. Its subcellular location is the microtubule organizing center. The protein localises to the centrosome. It is found in the centriolar satellite. Functionally, the BBSome complex is thought to function as a coat complex required for sorting of specific membrane proteins to the primary cilia. The sequence is that of BBSome complex member BBS2 (bbs2) from Danio rerio (Zebrafish).